A 151-amino-acid chain; its full sequence is Viral interleukin-17 (151 aa).

The first 22 residues, 1 to 22, serve as a signal peptide directing secretion; the sequence is MTFRKTSLVLLLLLSIDCIVKS. Asparagine 36, asparagine 53, and asparagine 64 each carry an N-linked (GlcNAc...) asparagine; by host glycan. Disulfide bonds link cysteine 90–cysteine 140 and cysteine 95–cysteine 142.

The protein belongs to the IL-17 family.

The protein resides in the secreted. This Saimiri sciureus (Common squirrel monkey) protein is Viral interleukin-17 (13).